The chain runs to 215 residues: MADKSDLNALSGRFRGYYPVVIDVETAGFNAQSDALLEIAAVTLQMNKEGWLLPDETLHFHVEPFEGANLQPEALAFNGIDPTNPLRGAVSEHDALHAIFKAVRKGIKDKGCNRAIIVAHNANFDHSFVMAAAERASLKRNPFHPFATFDTAALSGLVLGQTVLAKACLAAGIPFDSSQAHSALYDTLQTAKLFCELVNRWKKLGGWPLPAAESE.

The Exonuclease domain occupies 20 to 194 (VVIDVETAGF…YDTLQTAKLF (175 aa)). Mg(2+)-binding residues include aspartate 23, glutamate 25, histidine 181, and aspartate 186. Histidine 181 acts as the Proton donor/acceptor in catalysis.

This sequence belongs to the RNase T family. In terms of assembly, homodimer. Mg(2+) serves as cofactor.

In terms of biological role, trims short 3' overhangs of a variety of RNA species, leaving a one or two nucleotide 3' overhang. Responsible for the end-turnover of tRNA: specifically removes the terminal AMP residue from uncharged tRNA (tRNA-C-C-A). Also appears to be involved in tRNA biosynthesis. The polypeptide is Ribonuclease T (Yersinia pseudotuberculosis serotype O:1b (strain IP 31758)).